The primary structure comprises 43 residues: Bacteriocin mundticin (43 aa).

A disulfide bridge links Cys9 with Cys14.

Functionally, this bacteriocin inhibits the growth of several Gram-positive bacteria, especially pathogenic L.monocytogenes and C.botulinum but has no effect on the growth of a number of yeasts and Gram-negative bacteria. The polypeptide is Bacteriocin mundticin (Enterococcus mundtii).